The chain runs to 513 residues: ATP synthase subunit alpha 1 (513 aa).

169–176 (GDRQCGKT) provides a ligand contact to ATP.

It belongs to the ATPase alpha/beta chains family. F-type ATPases have 2 components, CF(1) - the catalytic core - and CF(0) - the membrane proton channel. CF(1) has five subunits: alpha(3), beta(3), gamma(1), delta(1), epsilon(1). CF(0) has three main subunits: a(1), b(2) and c(9-12). The alpha and beta chains form an alternating ring which encloses part of the gamma chain. CF(1) is attached to CF(0) by a central stalk formed by the gamma and epsilon chains, while a peripheral stalk is formed by the delta and b chains.

It is found in the cell inner membrane. The enzyme catalyses ATP + H2O + 4 H(+)(in) = ADP + phosphate + 5 H(+)(out). Produces ATP from ADP in the presence of a proton gradient across the membrane. The alpha chain is a regulatory subunit. In Burkholderia pseudomallei (strain 1710b), this protein is ATP synthase subunit alpha 1.